The primary structure comprises 239 residues: tRNA (guanine-N(1)-)-methyltransferase (239 aa).

S-adenosyl-L-methionine is bound by residues Gly-108 and 127–132 (LGDYVL).

This sequence belongs to the RNA methyltransferase TrmD family. Homodimer.

It is found in the cytoplasm. It catalyses the reaction guanosine(37) in tRNA + S-adenosyl-L-methionine = N(1)-methylguanosine(37) in tRNA + S-adenosyl-L-homocysteine + H(+). Specifically methylates guanosine-37 in various tRNAs. The chain is tRNA (guanine-N(1)-)-methyltransferase from Streptococcus pneumoniae (strain JJA).